A 176-amino-acid polypeptide reads, in one-letter code: Ribosome maturation factor RimM (176 aa).

One can recognise a PRC barrel domain in the interval 93 to 166; it reads EGEYYHADLI…RVVIEMPGEI (74 aa).

Belongs to the RimM family. In terms of assembly, binds ribosomal protein uS19.

It is found in the cytoplasm. Functionally, an accessory protein needed during the final step in the assembly of 30S ribosomal subunit, possibly for assembly of the head region. Essential for efficient processing of 16S rRNA. May be needed both before and after RbfA during the maturation of 16S rRNA. It has affinity for free ribosomal 30S subunits but not for 70S ribosomes. The chain is Ribosome maturation factor RimM from Rhodopseudomonas palustris (strain BisA53).